The sequence spans 204 residues: MTQQEMITINAELRDVTKTKAIRSLRKKGNIPAVVYGKGHNNVNLTLSAKEFTKQYKLGFLSAHVIELDISGKKEYALVRDIQWHVVKDTIQHVDFQFVDKGSEIKIDIPLSFVNESKSPGIKLGGVLNVLCRSITVKCSPDKIPQAIEVDLSGKMIGQSVHISDVKLPGGVKLAAHEEENFTVVTISAADSGVEESQVETTEE.

The protein belongs to the bacterial ribosomal protein bL25 family. CTC subfamily. As to quaternary structure, part of the 50S ribosomal subunit; part of the 5S rRNA/L5/L18/L25 subcomplex. Contacts the 5S rRNA. Binds to the 5S rRNA independently of L5 and L18.

Its function is as follows. This is one of the proteins that binds to the 5S RNA in the ribosome where it forms part of the central protuberance. The protein is Large ribosomal subunit protein bL25 of Wolbachia sp. subsp. Brugia malayi (strain TRS).